Reading from the N-terminus, the 249-residue chain is MVAFDANEALTPCREGRGIGAILFDRERLRQAEVGLFSPQHWGSKARPVGEGGRGSAWFIDAPFGASVLRHYLRGGLAAKISHDQYLWRGSDRTRSFAEFRLMRALREKKLPVPRPIAAYYMREGLRYRAAILMERIEGVRSLADRALVAGRGAPWEETGRLIARFHRAGLDHADLNAHNILFDGNGHGWLIDFDRGVIRIPATAWRERNLKRLLRSLIKLRGERSVEDVQKDYARLRRAYDMAWNRGT.

Asp-175 is an active-site residue.

Belongs to the protein kinase superfamily. KdkA/RfaP family.

The protein resides in the cell inner membrane. The enzyme catalyses an alpha-Kdo-(2-&gt;6)-lipid IVA + ATP = a 4-O-phospho-alpha-Kdo-(2-&gt;6)-lipid IVA + ADP + H(+). It functions in the pathway bacterial outer membrane biogenesis; LPS core biosynthesis. In terms of biological role, catalyzes the ATP-dependent phosphorylation of the 3-deoxy-D-manno-octulosonic acid (Kdo) residue in Kdo-lipid IV(A) at the 4-OH position. The sequence is that of 3-deoxy-D-manno-octulosonic acid kinase from Stenotrophomonas maltophilia (strain K279a).